We begin with the raw amino-acid sequence, 185 residues long: ATP synthase subunit delta (185 aa).

This sequence belongs to the ATPase delta chain family. As to quaternary structure, F-type ATPases have 2 components, F(1) - the catalytic core - and F(0) - the membrane proton channel. F(1) has five subunits: alpha(3), beta(3), gamma(1), delta(1), epsilon(1). CF(0) has four main subunits: a(1), b(1), b'(1) and c(10-14). The alpha and beta chains form an alternating ring which encloses part of the gamma chain. F(1) is attached to F(0) by a central stalk formed by the gamma and epsilon chains, while a peripheral stalk is formed by the delta, b and b' chains.

Its subcellular location is the cell inner membrane. Its function is as follows. F(1)F(0) ATP synthase produces ATP from ADP in the presence of a proton or sodium gradient. F-type ATPases consist of two structural domains, F(1) containing the extramembraneous catalytic core and F(0) containing the membrane proton channel, linked together by a central stalk and a peripheral stalk. During catalysis, ATP synthesis in the catalytic domain of F(1) is coupled via a rotary mechanism of the central stalk subunits to proton translocation. Functionally, this protein is part of the stalk that links CF(0) to CF(1). It either transmits conformational changes from CF(0) to CF(1) or is implicated in proton conduction. This is ATP synthase subunit delta from Gloeobacter violaceus (strain ATCC 29082 / PCC 7421).